Here is a 111-residue protein sequence, read N- to C-terminus: Dynein light chain Tctex-type (111 aa).

It belongs to the dynein light chain Tctex-type family.

The protein localises to the cytoplasm. The protein resides in the cytoskeleton. In terms of biological role, acts as a non-catalytic accessory component of a dynein complex. This is Dynein light chain Tctex-type (dlc1) from Schizosaccharomyces pombe (strain 972 / ATCC 24843) (Fission yeast).